The following is a 408-amino-acid chain: DNA primase DnaG (408 aa).

Positions Pro-165–Thr-243 constitute a Toprim domain. Glu-171, Asp-216, and Asp-218 together coordinate Mg(2+).

This sequence belongs to the archaeal DnaG primase family. In terms of assembly, forms a ternary complex with MCM helicase and DNA. Component of the archaeal exosome complex. Mg(2+) serves as cofactor.

It carries out the reaction ssDNA + n NTP = ssDNA/pppN(pN)n-1 hybrid + (n-1) diphosphate.. In terms of biological role, RNA polymerase that catalyzes the synthesis of short RNA molecules used as primers for DNA polymerase during DNA replication. Also part of the exosome, which is a complex involved in RNA degradation. Acts as a poly(A)-binding protein that enhances the interaction between heteromeric, adenine-rich transcripts and the exosome. This is DNA primase DnaG from Sulfurisphaera tokodaii (strain DSM 16993 / JCM 10545 / NBRC 100140 / 7) (Sulfolobus tokodaii).